The following is a 369-amino-acid chain: Phosphate acyltransferase (369 aa).

The interval 342-369 (ASRAPNSQTAGGERAAAVPQSAQLRMDS) is disordered.

Belongs to the PlsX family. In terms of assembly, homodimer. Probably interacts with PlsY.

It is found in the cytoplasm. The enzyme catalyses a fatty acyl-[ACP] + phosphate = an acyl phosphate + holo-[ACP]. Its pathway is lipid metabolism; phospholipid metabolism. Catalyzes the reversible formation of acyl-phosphate (acyl-PO(4)) from acyl-[acyl-carrier-protein] (acyl-ACP). This enzyme utilizes acyl-ACP as fatty acyl donor, but not acyl-CoA. This chain is Phosphate acyltransferase, found in Methylocella silvestris (strain DSM 15510 / CIP 108128 / LMG 27833 / NCIMB 13906 / BL2).